The sequence spans 680 residues: Methionine--tRNA ligase (680 aa).

Residues 14 to 24 carry the 'HIGH' region motif; sequence PYANGPIHLGH. Residues cysteine 145, cysteine 148, cysteine 158, and cysteine 161 each contribute to the Zn(2+) site. The 'KMSKS' region signature appears at 330–334; the sequence is KMSKS. Lysine 333 is an ATP binding site. The tRNA-binding domain maps to 579–680; it reads DFAKVDFRIA…DGAQPGMRVK (102 aa).

This sequence belongs to the class-I aminoacyl-tRNA synthetase family. MetG type 1 subfamily. Homodimer. The cofactor is Zn(2+).

The protein localises to the cytoplasm. The enzyme catalyses tRNA(Met) + L-methionine + ATP = L-methionyl-tRNA(Met) + AMP + diphosphate. Is required not only for elongation of protein synthesis but also for the initiation of all mRNA translation through initiator tRNA(fMet) aminoacylation. The sequence is that of Methionine--tRNA ligase from Hydrogenovibrio crunogenus (strain DSM 25203 / XCL-2) (Thiomicrospira crunogena).